We begin with the raw amino-acid sequence, 284 residues long: ATP synthase subunit beta, chloroplastic (284 aa).

The protein belongs to the ATPase alpha/beta chains family. F-type ATPases have 2 components, CF(1) - the catalytic core - and CF(0) - the membrane proton channel. CF(1) has five subunits: alpha(3), beta(3), gamma(1), delta(1), epsilon(1). CF(0) has four main subunits: a(1), b(1), b'(1) and c(9-12).

It localises to the plastid. Its subcellular location is the chloroplast thylakoid membrane. It catalyses the reaction ATP + H2O + 4 H(+)(in) = ADP + phosphate + 5 H(+)(out). Produces ATP from ADP in the presence of a proton gradient across the membrane. The catalytic sites are hosted primarily by the beta subunits. The chain is ATP synthase subunit beta, chloroplastic (atpB) from Asplenium nidus (Bird's nest fern).